Here is a 343-residue protein sequence, read N- to C-terminus: TATA box-binding protein-like 2 (343 aa).

The interval 71–152 (PDEVTQENKD…SDSLSLASIT (82 aa)) is disordered. Residues 76–90 (QENKDQPVISKHETE) show a composition bias toward basic and acidic residues. A compositionally biased stretch (low complexity) spans 94–127 (ESQSPQSRLPSPSEQDVGLGLNSSSLSNSHSQLH). The segment covering 143-152 (SDSLSLASIT) has biased composition (polar residues).

The protein belongs to the TBP family. Interacts with TAF3. Ubiquitously expressed in all tissues examined with highest levels in heart, lung, ovary, spleen and testes.

Its subcellular location is the cytoplasm. The protein resides in the nucleus. Its function is as follows. Transcription factor required in complex with TAF3 for the differentiation of myoblasts into myocytes. The complex replaces TFIID at specific promoters at an early stage in the differentiation process. This Homo sapiens (Human) protein is TATA box-binding protein-like 2.